The primary structure comprises 72 residues: Sperm protein associated with the nucleus on the X chromosome N1 (72 aa).

A disordered region spans residues 1–44; sequence MEQPTSSINGEKRKSPCESNNENDEMQETPNRDLAPEPSLKKMK.

The protein belongs to the SPAN-X family.

This is Sperm protein associated with the nucleus on the X chromosome N1 (SPANXN1) from Homo sapiens (Human).